Consider the following 355-residue polypeptide: Isocitrate dehydrogenase [NAD] subunit gamma, mitochondrial (355 aa).

Ile1 is a transit peptide (mitochondrion). The citrate site is built by Thr82 and Asn95. Substrate-binding residues include Arg98, Arg129, and Asp216. Asp216 lines the Mn(2+) pocket. ADP is bound by residues Asn274, Thr275, and Asn286.

Belongs to the isocitrate and isopropylmalate dehydrogenases family. As to quaternary structure, heterooligomer of subunits alpha (IDH3A), beta (IDH3B), and gamma (IDH3G) in the apparent ratio of 2:1:1. The heterodimer containing one IDH3A and one IDH3B subunit and the heterodimer containing one IDH3A and one IDH3G subunit assemble into a heterotetramer (which contains two subunits of IDH3A, one of IDH3B and one of IDH3G) and further into the heterooctamer. Requires Mg(2+) as cofactor. It depends on Mn(2+) as a cofactor.

Its subcellular location is the mitochondrion. Its activity is regulated as follows. The heterotetramer and the heterodimer composed of IDH3A and IDH3G subunits can be allosterically activated by citrate (CIT) or/and ADP, and the two activators can act independently or synergistically. The heterodimer composed of IDH3A and IDH3B subunits cannot be allosterically regulated and the allosteric regulation of the heterotetramer is through the IDH3G subunit and not the IDH3B subunit. The IDH3G subunit contains the allosteric site which consists of a CIT-binding site and an ADP-binding site, and the binding of CIT and ADP causes conformational changes at the allosteric site which are transmitted to the active site in the catalytic subunit (IDH3A) through a cascade of conformational changes at the heterodimer interface, leading to stabilization of the isocitrate-binding at the active site and thus activation of the enzyme. ATP can activate the heterotetramer and the heterodimer composed of IDH3A and IDH3G subunits at low concentrations but inhibits their activities at high concentrations, whereas ATP exhibits only inhibitory effect on the heterodimer composed of IDH3A and IDH3B subunits. Its function is as follows. Regulatory subunit which plays a role in the allosteric regulation of the enzyme catalyzing the decarboxylation of isocitrate (ICT) into alpha-ketoglutarate. The heterodimer composed of the alpha (IDH3A) and beta (IDH3B) subunits and the heterodimer composed of the alpha (IDH3A) and gamma (IDH3G) subunits, have considerable basal activity but the full activity of the heterotetramer (containing two subunits of IDH3A, one of IDH3B and one of IDH3G) requires the assembly and cooperative function of both heterodimers. The protein is Isocitrate dehydrogenase [NAD] subunit gamma, mitochondrial (IDH3G) of Macaca fascicularis (Crab-eating macaque).